Reading from the N-terminus, the 587-residue chain is Kelch-like protein 3 (587 aa).

Residues 1-24 (MEGESVKPSPQPTAQAEDEEKNRR) form a disordered region. The BTB domain occupies 50-117 (CDVMIVAEDV…IYTAEIEVTE (68 aa)). A BACK domain is found at 152-254 (CLGIRAFADV…PRDYLVQTVE (103 aa)). At threonine 295 the chain carries Phosphothreonine. 6 Kelch repeats span residues 302–347 (VMIV…FMAG), 348–394 (HVYA…VLND), 396–441 (LYAV…VVEG), 442–490 (KLYA…VLSG), 491–537 (QLYA…AVNG), and 539–585 (LYVV…VIHK). A Phosphothreonine modification is found at threonine 375. Residues serine 376 and serine 433 each carry the phosphoserine modification.

The protein belongs to the KLHL3 family. As to quaternary structure, homodimer. Component of the BCR(KLHL3) E3 ubiquitin ligase complex, at least composed of CUL3 and KLHL3 and RBX1. Interacts with CLDN8. Post-translationally, phosphorylation at Ser-433 by PKA or PKC decreases the interaction with WNK1 and WNK4, leading to inhibit their degradation by the BCR(KLHL3) complex. Phosphorylated at Ser-433 by PKC in response to angiotensin II signaling, decreasing ability to promote degradation of WNK1 and WNK4, leading to activation of Na-Cl cotransporter SLC12A3/NCC. Phosphorylation at Ser-433 is increased by insulin. Dephosphorylated at Ser-433 by calcineurin PPP3CA, promoting degradation of WNK1 and WNK4. In terms of tissue distribution, present at high level in brain and kidney (at protein level). Weakly expressed in other tissues. In kidney, predominantly localizes to the distal convoluted tubule (DCT) and collecting duct, with apical localization in the DCT (at protein level).

Its subcellular location is the cytoplasm. The protein resides in the cytosol. It is found in the cytoskeleton. It participates in protein modification; protein ubiquitination. In terms of biological role, substrate-specific adapter of a BCR (BTB-CUL3-RBX1) E3 ubiquitin ligase complex that acts as a regulator of ion transport in the distal nephron. The BCR(KLHL3) complex acts by mediating ubiquitination and degradation of WNK1 and WNK4, two activators of Na-Cl cotransporter SLC12A3/NCC in distal convoluted tubule cells of kidney, thereby regulating NaCl reabsorption. The BCR(KLHL3) complex also mediates ubiquitination of CLDN8, a tight-junction protein required for paracellular chloride transport in the kidney, leading to its degradation. The protein is Kelch-like protein 3 of Mus musculus (Mouse).